The following is a 151-amino-acid chain: Large ribosomal subunit protein uL15 (151 aa).

The span at 1–14 (MRREKKSRAYRGSR) shows a compositional bias: basic residues. Residues 1–33 (MRREKKSRAYRGSRTHGWGRVGQHRKSGSRGGR) are disordered.

This sequence belongs to the universal ribosomal protein uL15 family. Part of the 50S ribosomal subunit.

Its function is as follows. Binds to the 23S rRNA. In Thermofilum pendens (strain DSM 2475 / Hrk 5), this protein is Large ribosomal subunit protein uL15.